The following is a 208-amino-acid chain: LexA repressor (208 aa).

The segment at residues 28 to 48 (RAEIARQLGFRSANAAEEHLK) is a DNA-binding region (H-T-H motif). Catalysis depends on for autocatalytic cleavage activity residues serine 125 and lysine 162.

The protein belongs to the peptidase S24 family. As to quaternary structure, homodimer.

The catalysed reaction is Hydrolysis of Ala-|-Gly bond in repressor LexA.. Functionally, represses a number of genes involved in the response to DNA damage (SOS response), including recA and lexA. In the presence of single-stranded DNA, RecA interacts with LexA causing an autocatalytic cleavage which disrupts the DNA-binding part of LexA, leading to derepression of the SOS regulon and eventually DNA repair. This chain is LexA repressor, found in Alteromonas mediterranea (strain DSM 17117 / CIP 110805 / LMG 28347 / Deep ecotype).